The primary structure comprises 171 residues: Shikimate kinase (171 aa).

14–19 contacts ATP; it reads GAGKST. A Mg(2+)-binding site is contributed by serine 18. The substrate site is built by aspartate 36, arginine 60, and glycine 82. ATP is bound at residue arginine 120. Residue arginine 139 participates in substrate binding. Residue glutamine 156 participates in ATP binding.

The protein belongs to the shikimate kinase family. Monomer. Mg(2+) serves as cofactor.

Its subcellular location is the cytoplasm. The catalysed reaction is shikimate + ATP = 3-phosphoshikimate + ADP + H(+). It functions in the pathway metabolic intermediate biosynthesis; chorismate biosynthesis; chorismate from D-erythrose 4-phosphate and phosphoenolpyruvate: step 5/7. Functionally, catalyzes the specific phosphorylation of the 3-hydroxyl group of shikimic acid using ATP as a cosubstrate. The protein is Shikimate kinase of Shewanella sp. (strain ANA-3).